Reading from the N-terminus, the 334-residue chain is Sensor protein BceS (334 aa).

The Cytoplasmic portion of the chain corresponds to 1–12 (MIKAFLIERRSW). A helical transmembrane segment spans residues 13–33 (IAAFLFQQALMLFIAFVDPSI). Ser34 is a topological domain (extracellular). The helical transmembrane segment at 35-55 (FGNVLYMVYLCILFFIIFLWF) threads the bilayer. Topologically, residues 56 to 334 (RYRKETAFYK…RNQFEHVISV (279 aa)) are cytoplasmic. A Histidine kinase domain is found at 121–326 (AWIHEVKTPL…VFTLTFPIRN (206 aa)). His124 carries the post-translational modification Phosphohistidine; by autocatalysis.

It is found in the cell membrane. The catalysed reaction is ATP + protein L-histidine = ADP + protein N-phospho-L-histidine.. In terms of biological role, member of the two-component regulatory system BceS/BceR involved in the regulation of bacitracin resistance. Activates BceR in response to extracellular bacitracin. The sequence is that of Sensor protein BceS (bceS) from Bacillus subtilis (strain 168).